A 375-amino-acid polypeptide reads, in one-letter code: Queuine tRNA-ribosyltransferase (375 aa).

Residue Asp-89 is the Proton acceptor of the active site. Substrate is bound by residues 89-93 (DSGGF), Asp-143, Gln-187, and Gly-214. The RNA binding stretch occupies residues 245 to 251 (GVGKPED). Asp-264 functions as the Nucleophile in the catalytic mechanism. Positions 269–273 (TRNAR) are RNA binding; important for wobble base 34 recognition. Zn(2+) is bound by residues Cys-302, Cys-304, Cys-307, and His-333.

This sequence belongs to the queuine tRNA-ribosyltransferase family. Homodimer. Within each dimer, one monomer is responsible for RNA recognition and catalysis, while the other monomer binds to the replacement base PreQ1. Zn(2+) serves as cofactor.

It carries out the reaction 7-aminomethyl-7-carbaguanine + guanosine(34) in tRNA = 7-aminomethyl-7-carbaguanosine(34) in tRNA + guanine. It functions in the pathway tRNA modification; tRNA-queuosine biosynthesis. Catalyzes the base-exchange of a guanine (G) residue with the queuine precursor 7-aminomethyl-7-deazaguanine (PreQ1) at position 34 (anticodon wobble position) in tRNAs with GU(N) anticodons (tRNA-Asp, -Asn, -His and -Tyr). Catalysis occurs through a double-displacement mechanism. The nucleophile active site attacks the C1' of nucleotide 34 to detach the guanine base from the RNA, forming a covalent enzyme-RNA intermediate. The proton acceptor active site deprotonates the incoming PreQ1, allowing a nucleophilic attack on the C1' of the ribose to form the product. After dissociation, two additional enzymatic reactions on the tRNA convert PreQ1 to queuine (Q), resulting in the hypermodified nucleoside queuosine (7-(((4,5-cis-dihydroxy-2-cyclopenten-1-yl)amino)methyl)-7-deazaguanosine). This chain is Queuine tRNA-ribosyltransferase, found in Klebsiella pneumoniae subsp. pneumoniae (strain ATCC 700721 / MGH 78578).